A 460-amino-acid polypeptide reads, in one-letter code: Bifunctional protein GlmU (460 aa).

The segment at 1–229 is pyrophosphorylase; it reads MTNYAIILAA…FNESLGVNDR (229 aa). UDP-N-acetyl-alpha-D-glucosamine-binding positions include 8–11, Lys-22, Gln-72, and 77–78; these read LAAG and GT. Asp-102 is a binding site for Mg(2+). The UDP-N-acetyl-alpha-D-glucosamine site is built by Gly-139, Glu-154, Asn-169, and Asn-227. Asn-227 is a Mg(2+) binding site. Residues 230–250 form a linker region; sequence VALATAETVMRQRITQKHMVN. The interval 251 to 460 is N-acetyltransferase; the sequence is GVTFQNPETV…RLAHHPSRSK (210 aa). UDP-N-acetyl-alpha-D-glucosamine contacts are provided by Arg-332 and Lys-350. His-362 functions as the Proton acceptor in the catalytic mechanism. Tyr-365 and Asn-376 together coordinate UDP-N-acetyl-alpha-D-glucosamine. Acetyl-CoA is bound by residues Ala-379, 385–386, Ser-404, Ala-422, and Arg-439; that span reads NY.

The protein in the N-terminal section; belongs to the N-acetylglucosamine-1-phosphate uridyltransferase family. It in the C-terminal section; belongs to the transferase hexapeptide repeat family. Homotrimer. Mg(2+) is required as a cofactor.

It localises to the cytoplasm. It carries out the reaction alpha-D-glucosamine 1-phosphate + acetyl-CoA = N-acetyl-alpha-D-glucosamine 1-phosphate + CoA + H(+). The catalysed reaction is N-acetyl-alpha-D-glucosamine 1-phosphate + UTP + H(+) = UDP-N-acetyl-alpha-D-glucosamine + diphosphate. Its pathway is nucleotide-sugar biosynthesis; UDP-N-acetyl-alpha-D-glucosamine biosynthesis; N-acetyl-alpha-D-glucosamine 1-phosphate from alpha-D-glucosamine 6-phosphate (route II): step 2/2. It functions in the pathway nucleotide-sugar biosynthesis; UDP-N-acetyl-alpha-D-glucosamine biosynthesis; UDP-N-acetyl-alpha-D-glucosamine from N-acetyl-alpha-D-glucosamine 1-phosphate: step 1/1. It participates in bacterial outer membrane biogenesis; LPS lipid A biosynthesis. Catalyzes the last two sequential reactions in the de novo biosynthetic pathway for UDP-N-acetylglucosamine (UDP-GlcNAc). The C-terminal domain catalyzes the transfer of acetyl group from acetyl coenzyme A to glucosamine-1-phosphate (GlcN-1-P) to produce N-acetylglucosamine-1-phosphate (GlcNAc-1-P), which is converted into UDP-GlcNAc by the transfer of uridine 5-monophosphate (from uridine 5-triphosphate), a reaction catalyzed by the N-terminal domain. The polypeptide is Bifunctional protein GlmU (Streptococcus pyogenes serotype M18 (strain MGAS8232)).